A 343-amino-acid polypeptide reads, in one-letter code: Heat-inducible transcription repressor HrcA (343 aa).

The protein belongs to the HrcA family.

Functionally, negative regulator of class I heat shock genes (grpE-dnaK-dnaJ and groELS operons). Prevents heat-shock induction of these operons. The chain is Heat-inducible transcription repressor HrcA from Mycobacterium avium (strain 104).